We begin with the raw amino-acid sequence, 567 residues long: Hexose transporter HXT9 (567 aa).

The span at 1 to 16 (MSGVNNTSANDLSTTE) shows a compositional bias: polar residues. The tract at residues 1-45 (MSGVNNTSANDLSTTESNSNSVANAPSVKTEHNDSKNSLNLDATE) is disordered. Residues 1–56 (MSGVNNTSANDLSTTESNSNSVANAPSVKTEHNDSKNSLNLDATEPPIDLPQKPLS) lie on the Cytoplasmic side of the membrane. Positions 17 to 28 (SNSNSVANAPSV) are enriched in low complexity. The helical transmembrane segment at 57–77 (AYTTVAILCLMIAFGGFIFGW) threads the bilayer. Over 78-112 (DTGTISGFVNLSDFIRRFGQKNDKGTYYLSKVRMG) the chain is Extracellular. Residue Asn-87 is glycosylated (N-linked (GlcNAc...) asparagine). Residues 113–133 (LIVSIFNIGCAIGGIVLSKVG) traverse the membrane as a helical segment. Residues 134–139 (DIYGRR) lie on the Cytoplasmic side of the membrane. The chain crosses the membrane as a helical span at residues 140–160 (IGLITVTAIYVVGILIQITSI). Topologically, residues 161–170 (NKWYQYFIGR) are extracellular. The helical transmembrane segment at 171 to 191 (IISGLGVGGIAVLSPMLISEV) threads the bilayer. Topologically, residues 192-197 (APKQIR) are cytoplasmic. Residues 198 to 218 (GTLVQLYQLMCTMGIFLGYCT) traverse the membrane as a helical segment. Residues 219–232 (NYGTKNYHNATQWR) lie on the Extracellular side of the membrane. Residue Asn-227 is glycosylated (N-linked (GlcNAc...) asparagine). Residues 233–253 (VGLGLCFAWTTFMVSGMMFVP) form a helical membrane-spanning segment. Topologically, residues 254-336 (ESPRYLIEVG…IQSLQQLTGD (83 aa)) are cytoplasmic. Residues 337–353 (NYFFYYGTTIFKSVGLK) form a helical membrane-spanning segment. Residues 354–359 (DSFQTS) lie on the Extracellular side of the membrane. The chain crosses the membrane as a helical span at residues 360 to 377 (IIIGVVNFFSSFIAVYTI). The Cytoplasmic portion of the chain corresponds to 378–384 (ERFGRRT). A helical transmembrane segment spans residues 385–405 (CLLWGAASMLCCFAVFASVGV). The Extracellular segment spans residues 406-429 (TKLWPQGSSHQDITSQGAGNCMIV). Residues 430 to 450 (FTMFFIFSFATTWAGGCYVIV) traverse the membrane as a helical segment. Residues 451 to 467 (SETFPLRVKSRGMAIAT) lie on the Cytoplasmic side of the membrane. The chain crosses the membrane as a helical span at residues 468–488 (AANWMWGFLISFFTPFITGAI). Position 489 (Asn-489) is a topological domain, extracellular. The chain crosses the membrane as a helical span at residues 490–510 (FYYGYVFLGCLVFAYFYVFFF). Residues 511–567 (VPETKGLTLEEVNTMWLEGVPAWKSASWVPPERRTADYDADAIDHDDRPIYKRFFSS) are Cytoplasmic-facing.

This sequence belongs to the major facilitator superfamily. Sugar transporter (TC 2.A.1.1) family.

It is found in the membrane. In terms of biological role, probable glucose transporter. This chain is Hexose transporter HXT9 (HXT9), found in Saccharomyces cerevisiae (strain ATCC 204508 / S288c) (Baker's yeast).